We begin with the raw amino-acid sequence, 548 residues long: Acetamidase (548 aa).

Residues lysine 129 and serine 204 each act as charge relay system in the active site. The active-site Acyl-ester intermediate is serine 228.

It belongs to the amidase family.

The enzyme catalyses a monocarboxylic acid amide + H2O = a monocarboxylate + NH4(+). It catalyses the reaction acetamide + H2O = acetate + NH4(+). Allows acetamide to be used as a sole carbon or nitrogen source. This chain is Acetamidase (amdS), found in Emericella nidulans (strain FGSC A4 / ATCC 38163 / CBS 112.46 / NRRL 194 / M139) (Aspergillus nidulans).